We begin with the raw amino-acid sequence, 539 residues long: CTP synthase (539 aa).

The segment at 1–269 is amidoligase domain; it reads MSATKYIFVT…DERVLSKLKL (269 aa). Serine 15 contacts CTP. Serine 15 is a UTP binding site. 16–21 serves as a coordination point for ATP; that stretch reads SLGKGI. L-glutamine is bound at residue tyrosine 56. Residue aspartate 73 coordinates ATP. Residues aspartate 73 and glutamate 143 each contribute to the Mg(2+) site. CTP contacts are provided by residues 150 to 152, 190 to 195, and lysine 226; these read DIE and KTKPTQ. Residues 190 to 195 and lysine 226 each bind UTP; that span reads KTKPTQ. One can recognise a Glutamine amidotransferase type-1 domain in the interval 295 to 537; it reads NIALVGKYVE…VKAANDFAKG (243 aa). Residue glycine 357 coordinates L-glutamine. Catalysis depends on cysteine 384, which acts as the Nucleophile; for glutamine hydrolysis. L-glutamine contacts are provided by residues 385-388, glutamate 408, and arginine 465; that span reads LGMQ. Catalysis depends on residues histidine 510 and glutamate 512.

Belongs to the CTP synthase family. Homotetramer.

It carries out the reaction UTP + L-glutamine + ATP + H2O = CTP + L-glutamate + ADP + phosphate + 2 H(+). It catalyses the reaction L-glutamine + H2O = L-glutamate + NH4(+). The catalysed reaction is UTP + NH4(+) + ATP = CTP + ADP + phosphate + 2 H(+). It functions in the pathway pyrimidine metabolism; CTP biosynthesis via de novo pathway; CTP from UDP: step 2/2. Its activity is regulated as follows. Allosterically activated by GTP, when glutamine is the substrate; GTP has no effect on the reaction when ammonia is the substrate. The allosteric effector GTP functions by stabilizing the protein conformation that binds the tetrahedral intermediate(s) formed during glutamine hydrolysis. Inhibited by the product CTP, via allosteric rather than competitive inhibition. Functionally, catalyzes the ATP-dependent amination of UTP to CTP with either L-glutamine or ammonia as the source of nitrogen. Regulates intracellular CTP levels through interactions with the four ribonucleotide triphosphates. This chain is CTP synthase, found in Cytophaga hutchinsonii (strain ATCC 33406 / DSM 1761 / CIP 103989 / NBRC 15051 / NCIMB 9469 / D465).